We begin with the raw amino-acid sequence, 239 residues long: uncharacterized protein (239 aa).

3 helical membrane passes run 125–144 (LAIISFICSPSLSFFLLILY), 149–171 (IFVLFKLFAVEYVRYELVYFLFL), and 197–216 (SVLNLSVSVTILAVLQGILF).

The protein localises to the cell membrane. This is an uncharacterized protein from Aquifex aeolicus (strain VF5).